A 297-amino-acid polypeptide reads, in one-letter code: Formiminotransferase cyclodeaminase-like protein (297 aa).

The interval 2 to 196 (LREMLGCCKV…GVVAVGACGW (195 aa)) is formiminotransferase N-subdomain. His89 (for formimidoyltransferase activity) is an active-site residue. A folate-binding site is contributed by 178 to 187 (GPQEVSKAKG).

The protein belongs to the formiminotransferase family. Expressed constitutively in roots, stems, leaves and flowers.

The protein localises to the golgi apparatus. Its subcellular location is the trans-Golgi network. The catalysed reaction is (6S)-5-formyl-5,6,7,8-tetrahydrofolate + L-glutamate = N-formyl-L-glutamate + (6S)-5,6,7,8-tetrahydrofolate + H(+). The enzyme catalyses 5-formimidoyltetrahydrofolate + L-glutamate = N-formimidoyl-L-glutamate + (6S)-5,6,7,8-tetrahydrofolate. Its pathway is one-carbon metabolism; tetrahydrofolate interconversion. In terms of biological role, involved in the regulation of root growth. May regulate sorting and/or transportation of trans-Golgi network (TGN) vesicles in root cap peripheral cells, thus influencing the extracellular secretion of mucilage components in the root cap. In Arabidopsis thaliana (Mouse-ear cress), this protein is Formiminotransferase cyclodeaminase-like protein.